The primary structure comprises 562 residues: Actin-related protein 8 (562 aa).

248 to 251 (DVGD) is an ATP binding site.

The protein belongs to the actin family. ARP8 subfamily. Component of the chromatin remodeling Ino80 complex. Exists as monomers and dimers, but the dimer is most probably the biologically relevant form required for stable interactions with histones that exploits the twofold symmetry of the nucleosome core.

It localises to the nucleus. In terms of biological role, plays an important role in the functional organization of mitotic chromosomes. Exhibits low basal ATPase activity, and unable to polymerize. Proposed core component of the chromatin remodeling INO80 complex which is involved in transcriptional regulation, DNA replication and probably DNA repair. Strongly prefer nucleosomes and H3-H4 tetramers over H2A-H2B dimers, suggesting it may act as a nucleosome recognition module within the complex. This Aedes aegypti (Yellowfever mosquito) protein is Actin-related protein 8.